The following is a 278-amino-acid chain: MGIKAYFELIRLNNCLMASFGAFIGGLIASYFNLEMVNNLIFASIVVFLVCGFGNALNDIYDLKIDRINKPERPIPSKRISLTNARIFSYLLVFTGLCISLFNITCFLMAVLNSIVLQQYASTYKKNKIIGNLIVAYLTGSVFIFGGIAVGNIDVTIMLFLCALFAMWSREIIKDYEDIEGDIQEKVISIPIKCGENSIYIAALLLVFAVLLSSLPYLFGFFGIYYLISVVFCDLLFLIGIFPLLINPSRRGAKNASRNIKIVTNLVLVAFVIGSFFK.

8 helical membrane passes run 17–37 (MASFGAFIGGLIASYFNLEMV), 40–60 (LIFASIVVFLVCGFGNALNDI), 91–111 (LLVFTGLCISLFNITCFLMAV), 129–149 (IIGNLIVAYLTGSVFIFGGIA), 153–173 (IDVTIMLFLCALFAMWSREII), 204–224 (LLLVFAVLLSSLPYLFGFFGI), 226–246 (YLISVVFCDLLFLIGIFPLLI), and 257–277 (SRNIKIVTNLVLVAFVIGSFF).

It belongs to the UbiA prenyltransferase family. DGGGP synthase subfamily. Requires Mg(2+) as cofactor.

It is found in the cell membrane. The enzyme catalyses sn-3-O-(geranylgeranyl)glycerol 1-phosphate + (2E,6E,10E)-geranylgeranyl diphosphate = 2,3-bis-O-(geranylgeranyl)-sn-glycerol 1-phosphate + diphosphate. It functions in the pathway membrane lipid metabolism; glycerophospholipid metabolism. Prenyltransferase that catalyzes the transfer of the geranylgeranyl moiety of geranylgeranyl diphosphate (GGPP) to the C2 hydroxyl of (S)-3-O-geranylgeranylglyceryl phosphate (GGGP). This reaction is the second ether-bond-formation step in the biosynthesis of archaeal membrane lipids. In Methanococcus maripaludis (strain C5 / ATCC BAA-1333), this protein is Digeranylgeranylglyceryl phosphate synthase.